The following is a 577-amino-acid chain: Arginine--tRNA ligase (577 aa).

Residues 122 to 132 (PNVAKEMHVGH) carry the 'HIGH' region motif.

Belongs to the class-I aminoacyl-tRNA synthetase family. Monomer.

Its subcellular location is the cytoplasm. It catalyses the reaction tRNA(Arg) + L-arginine + ATP = L-arginyl-tRNA(Arg) + AMP + diphosphate. The chain is Arginine--tRNA ligase from Aliivibrio salmonicida (strain LFI1238) (Vibrio salmonicida (strain LFI1238)).